Here is a 283-residue protein sequence, read N- to C-terminus: S-methyl-5'-thioadenosine phosphorylase (283 aa).

Phosphate is bound at residue Thr-18. N6-acetyllysine is present on Lys-51. Phosphate contacts are provided by residues 60 to 61 (RH) and 93 to 94 (TA). Position 196 (Met-196) interacts with substrate. Thr-197 provides a ligand contact to phosphate. 220-222 (DYD) contacts substrate.

It belongs to the PNP/MTAP phosphorylase family. MTAP subfamily. As to quaternary structure, homotrimer. As to expression, ubiquitously expressed.

The protein localises to the cytoplasm. Its subcellular location is the nucleus. It catalyses the reaction S-methyl-5'-thioadenosine + phosphate = 5-(methylsulfanyl)-alpha-D-ribose 1-phosphate + adenine. It functions in the pathway amino-acid biosynthesis; L-methionine biosynthesis via salvage pathway; S-methyl-5-thio-alpha-D-ribose 1-phosphate from S-methyl-5'-thioadenosine (phosphorylase route): step 1/1. With respect to regulation, inhibited by 5'-methylthiotubercin and 5'-chloroformycin. Its function is as follows. Catalyzes the reversible phosphorylation of S-methyl-5'-thioadenosine (MTA) to adenine and 5-methylthioribose-1-phosphate. Involved in the breakdown of MTA, a major by-product of polyamine biosynthesis. Responsible for the first step in the methionine salvage pathway after MTA has been generated from S-adenosylmethionine. Has broad substrate specificity with 6-aminopurine nucleosides as preferred substrates. The protein is S-methyl-5'-thioadenosine phosphorylase of Homo sapiens (Human).